A 447-amino-acid polypeptide reads, in one-letter code: MDRMFGTDGVRGIANTELTAQMAYNLGRAGAYVLTEGAHKPKILVAKDTRISGDMLESALVAGILSVGAEAVILGVVPTPAVAYLTREYNADAGVMISASHNPVEYNGIKFFNNKGYKLSDELEDGIQKVIESDFEGVPSPIGIDLGRERIEVAALEDYTEFAKQTIPYNLKGMKIALDCANGASYKSAVKAFRDLGADVFVINDNPDGTNINKNCGSTHPEELMDYVVKKGCDLGFAFDGDADRCLAVDENGKLINGDFILMLCANYLKEIGKLKDDTLVVTVMSNLGLDIACRGLGIKLEKTKVGDRYVLEEMTKDNYVLGGEQSGHVIFLDYNTTGDGLVTALQVASIVKKKEKTLSELCSVMKELPQVLVNATVPNDKKNIYLEDAEIVEAIKEIEAKLNGVGRVLIRPSGTEPLVRVMLEGENQVEIDEMAHGLANLILSKI.

Ser-100 serves as the catalytic Phosphoserine intermediate. Positions 100, 240, 242, and 244 each coordinate Mg(2+). Ser-100 bears the Phosphoserine mark.

The protein belongs to the phosphohexose mutase family. Mg(2+) serves as cofactor. In terms of processing, activated by phosphorylation.

The catalysed reaction is alpha-D-glucosamine 1-phosphate = D-glucosamine 6-phosphate. In terms of biological role, catalyzes the conversion of glucosamine-6-phosphate to glucosamine-1-phosphate. This chain is Phosphoglucosamine mutase, found in Clostridium botulinum (strain Alaska E43 / Type E3).